A 314-amino-acid polypeptide reads, in one-letter code: 2-methoxy-6-polyprenyl-1,4-benzoquinol methylase, mitochondrial (314 aa).

A mitochondrion-targeting transit peptide spans 1 to 19; sequence MLQSLNRSVRYLSTSIGSR. S-adenosyl-L-methionine is bound by residues Thr-109, Asp-154, 186-187, and Ser-203; that span reads NS.

This sequence belongs to the class I-like SAM-binding methyltransferase superfamily. MenG/UbiE family. As to quaternary structure, component of a multi-subunit COQ enzyme complex.

Its subcellular location is the mitochondrion inner membrane. It catalyses the reaction a 2-methoxy-6-(all-trans-polyprenyl)benzene-1,4-diol + S-adenosyl-L-methionine = a 5-methoxy-2-methyl-3-(all-trans-polyprenyl)benzene-1,4-diol + S-adenosyl-L-homocysteine + H(+). It participates in cofactor biosynthesis; ubiquinone biosynthesis. Its function is as follows. Methyltransferase required for the conversion of 2-polyprenyl-6-methoxy-1,4-benzoquinol (DDMQH2) to 2-polyprenyl-3-methyl-6-methoxy-1,4-benzoquinol (DMQH2). This chain is 2-methoxy-6-polyprenyl-1,4-benzoquinol methylase, mitochondrial, found in Dictyostelium discoideum (Social amoeba).